We begin with the raw amino-acid sequence, 448 residues long: Probable glycine dehydrogenase (decarboxylating) subunit 1 (448 aa).

The protein belongs to the GcvP family. N-terminal subunit subfamily. In terms of assembly, the glycine cleavage system is composed of four proteins: P, T, L and H. In this organism, the P 'protein' is a heterodimer of two subunits.

It carries out the reaction N(6)-[(R)-lipoyl]-L-lysyl-[glycine-cleavage complex H protein] + glycine + H(+) = N(6)-[(R)-S(8)-aminomethyldihydrolipoyl]-L-lysyl-[glycine-cleavage complex H protein] + CO2. The glycine cleavage system catalyzes the degradation of glycine. The P protein binds the alpha-amino group of glycine through its pyridoxal phosphate cofactor; CO(2) is released and the remaining methylamine moiety is then transferred to the lipoamide cofactor of the H protein. The sequence is that of Probable glycine dehydrogenase (decarboxylating) subunit 1 from Caulobacter vibrioides (strain ATCC 19089 / CIP 103742 / CB 15) (Caulobacter crescentus).